The chain runs to 331 residues: tRNA-cytidine(32) 2-sulfurtransferase (331 aa).

The disordered stretch occupies residues 1 to 33; that stretch reads MNAPHMNDTAADAATLDDAAAPAGRPALTRREQ. Residues 8–23 are compositionally biased toward low complexity; it reads DTAADAATLDDAAAPA. Residues 71 to 76 carry the PP-loop motif motif; it reads SGGKDS. Residues C146, C149, and C237 each contribute to the [4Fe-4S] cluster site.

It belongs to the TtcA family. In terms of assembly, homodimer. The cofactor is Mg(2+). [4Fe-4S] cluster is required as a cofactor.

The protein resides in the cytoplasm. It carries out the reaction cytidine(32) in tRNA + S-sulfanyl-L-cysteinyl-[cysteine desulfurase] + AH2 + ATP = 2-thiocytidine(32) in tRNA + L-cysteinyl-[cysteine desulfurase] + A + AMP + diphosphate + H(+). Its pathway is tRNA modification. Functionally, catalyzes the ATP-dependent 2-thiolation of cytidine in position 32 of tRNA, to form 2-thiocytidine (s(2)C32). The sulfur atoms are provided by the cysteine/cysteine desulfurase (IscS) system. This chain is tRNA-cytidine(32) 2-sulfurtransferase, found in Burkholderia cenocepacia (strain HI2424).